We begin with the raw amino-acid sequence, 210 residues long: 2-hydroxy-3-keto-5-methylthiopentenyl-1-phosphate phosphatase (210 aa).

This sequence belongs to the HAD-like hydrolase superfamily. MtnX family.

The enzyme catalyses 2-hydroxy-5-methylsulfanyl-3-oxopent-1-enyl phosphate + H2O = 1,2-dihydroxy-5-(methylsulfanyl)pent-1-en-3-one + phosphate. It functions in the pathway amino-acid biosynthesis; L-methionine biosynthesis via salvage pathway; L-methionine from S-methyl-5-thio-alpha-D-ribose 1-phosphate: step 4/6. In terms of biological role, dephosphorylates 2-hydroxy-3-keto-5-methylthiopentenyl-1-phosphate (HK-MTPenyl-1-P) yielding 1,2-dihydroxy-3-keto-5-methylthiopentene (DHK-MTPene). The sequence is that of 2-hydroxy-3-keto-5-methylthiopentenyl-1-phosphate phosphatase from Microcystis aeruginosa.